A 422-amino-acid polypeptide reads, in one-letter code: AP-1 complex subunit mu-1-I (422 aa).

An MHD domain is found at 167–420 (KNEVFLDVIE…ITQNGEYEMR (254 aa)).

Belongs to the adaptor complexes medium subunit family. Adaptor protein complex 1 (AP-1) is a heterotetramer composed of two large adaptins (gamma- and beta'-type subunits), a medium adaptin (mu-type subunit AP47) and a small adaptin (sigma-type subunit AP19). Interacts (via N-terminus) with kvs-4. In terms of tissue distribution, expressed in the cholinergic motor neuron DA9.

The protein resides in the golgi apparatus. It localises to the cytoplasmic vesicle. The protein localises to the clathrin-coated vesicle membrane. It is found in the cell projection. Its subcellular location is the dendrite. In terms of biological role, component of the adaptor complexes which link clathrin to receptors in coated vesicles. Clathrin-associated protein complexes are believed to interact with the cytoplasmic tails of membrane proteins, leading to their selection and concentration. Required for many aspects of development and behavior, including negative regulation of vulval differentiation. Required for the dendritic localization of potassium channel kvs-4 in the cholinergic motor neuron DA9. The sequence is that of AP-1 complex subunit mu-1-I (unc-101) from Caenorhabditis elegans.